A 520-amino-acid polypeptide reads, in one-letter code: Biotinidase (520 aa).

The signal sequence occupies residues Met1–Gly21. The 285-residue stretch at Asn49–Pro333 folds into the CN hydrolase domain. Glu89 acts as the Proton acceptor in catalysis. N-linked (GlcNAc...) asparagine glycosylation is found at Asn96, Asn127, and Asn180. The active-site Proton donor is the Lys189. Cys222 (nucleophile) is an active-site residue. N-linked (GlcNAc...) asparagine glycans are attached at residues Asn326, Asn379, and Asn466.

Belongs to the carbon-nitrogen hydrolase superfamily. BTD/VNN family.

Its subcellular location is the secreted. The protein resides in the extracellular space. It catalyses the reaction biocytin + H2O = biotin + L-lysine. The catalysed reaction is biotin amide + H2O = biotin + NH4(+). Its function is as follows. Catalytic release of biotin from biocytin, the product of biotin-dependent carboxylases degradation. In Mus musculus (Mouse), this protein is Biotinidase (Btd).